The following is a 196-amino-acid chain: Imidazoleglycerol-phosphate dehydratase (196 aa).

The protein belongs to the imidazoleglycerol-phosphate dehydratase family.

The protein resides in the cytoplasm. The catalysed reaction is D-erythro-1-(imidazol-4-yl)glycerol 3-phosphate = 3-(imidazol-4-yl)-2-oxopropyl phosphate + H2O. Its pathway is amino-acid biosynthesis; L-histidine biosynthesis; L-histidine from 5-phospho-alpha-D-ribose 1-diphosphate: step 6/9. The chain is Imidazoleglycerol-phosphate dehydratase from Phenylobacterium zucineum (strain HLK1).